Consider the following 484-residue polypeptide: Ferrochelatase-2, chloroplastic (484 aa).

Belongs to the ferrochelatase family.

Its subcellular location is the plastid. The protein localises to the chloroplast. It catalyses the reaction heme b + 2 H(+) = protoporphyrin IX + Fe(2+). It participates in porphyrin-containing compound metabolism; protoheme biosynthesis; protoheme from protoporphyrin-IX: step 1/1. Catalyzes the ferrous insertion into protoporphyrin IX. This chain is Ferrochelatase-2, chloroplastic (HEMH), found in Hordeum vulgare (Barley).